The following is a 146-amino-acid chain: Hemoglobin subunit beta-1 (146 aa).

The 145-residue stretch at 2–146 folds into the Globin domain; it reads KWTDKERAVI…VVSALGKQYC (145 aa). The heme b site is built by H63 and H92.

Belongs to the globin family. In terms of assembly, heterotetramer of two alpha chains and two beta chains. As to expression, red blood cells.

Involved in oxygen transport from gills to the various peripheral tissues. This is Hemoglobin subunit beta-1 from Lycodes reticulatus (Arctic eelpout).